Consider the following 434-residue polypeptide: DNA primase DnaG (434 aa).

The Toprim domain maps to Asp-171–Glu-250. Glu-177, Asp-219, and Asp-221 together coordinate Mg(2+). A disordered region spans residues Gly-290–Pro-319. The segment covering Glu-292–Gly-303 has biased composition (basic and acidic residues).

This sequence belongs to the archaeal DnaG primase family. As to quaternary structure, forms a ternary complex with MCM helicase and DNA. The cofactor is Mg(2+).

It carries out the reaction ssDNA + n NTP = ssDNA/pppN(pN)n-1 hybrid + (n-1) diphosphate.. Its function is as follows. RNA polymerase that catalyzes the synthesis of short RNA molecules used as primers for DNA polymerase during DNA replication. The sequence is that of DNA primase DnaG from Methanocorpusculum labreanum (strain ATCC 43576 / DSM 4855 / Z).